A 452-amino-acid polypeptide reads, in one-letter code: GTPase Der (452 aa).

EngA-type G domains are found at residues 4–169 (PIVA…PTTE) and 177–352 (IKVA…ASHR). GTP is bound by residues 10-17 (GRPNVGKS), 57-61 (DTGGL), 120-123 (NKCE), 183-190 (GRPNVGKS), 230-234 (DTAGI), and 295-298 (NKWD). The KH-like domain maps to 353 to 438 (RRVSTAVINE…PIRLIWRGKS (86 aa)).

This sequence belongs to the TRAFAC class TrmE-Era-EngA-EngB-Septin-like GTPase superfamily. EngA (Der) GTPase family. In terms of assembly, associates with the 50S ribosomal subunit.

In terms of biological role, GTPase that plays an essential role in the late steps of ribosome biogenesis. The sequence is that of GTPase Der from Gloeothece citriformis (strain PCC 7424) (Cyanothece sp. (strain PCC 7424)).